Reading from the N-terminus, the 281-residue chain is Elongation factor Ts (281 aa).

The tract at residues 79–82 is involved in Mg(2+) ion dislocation from EF-Tu; sequence TDFV.

Belongs to the EF-Ts family.

It localises to the cytoplasm. In terms of biological role, associates with the EF-Tu.GDP complex and induces the exchange of GDP to GTP. It remains bound to the aminoacyl-tRNA.EF-Tu.GTP complex up to the GTP hydrolysis stage on the ribosome. The polypeptide is Elongation factor Ts (Wolbachia pipientis subsp. Culex pipiens (strain wPip)).